The sequence spans 257 residues: Pimeloyl-[acyl-carrier protein] methyl ester esterase (257 aa).

One can recognise an AB hydrolase-1 domain in the interval His-15 to His-241. Substrate contacts are provided by residues Trp-22, Ser-82–Leu-83, and Phe-143–Gln-147. The active-site Nucleophile is the Ser-82. Catalysis depends on residues Asp-207 and His-235. His-235 serves as a coordination point for substrate.

Belongs to the AB hydrolase superfamily. Carboxylesterase BioH family. In terms of assembly, monomer.

Its subcellular location is the cytoplasm. It catalyses the reaction 6-carboxyhexanoyl-[ACP] methyl ester + H2O = 6-carboxyhexanoyl-[ACP] + methanol + H(+). The protein operates within cofactor biosynthesis; biotin biosynthesis. Functionally, the physiological role of BioH is to remove the methyl group introduced by BioC when the pimeloyl moiety is complete. It allows to synthesize pimeloyl-ACP via the fatty acid synthetic pathway through the hydrolysis of the ester bonds of pimeloyl-ACP esters. The chain is Pimeloyl-[acyl-carrier protein] methyl ester esterase from Klebsiella pneumoniae subsp. pneumoniae (strain ATCC 700721 / MGH 78578).